The chain runs to 365 residues: MREVGCPEEDLFSFLSSKRREDLGYRNILSSMCTPPHPVAARAHAMFLETNLGDPGLFPGTAALEDLLVRRLGTLMHLPDAGGYATSGGTESNIQAFRIAKKLKSAKSPNVVVPASSHFSFTKACDILGLEMRTVPLDAGFRMETEAVDGLIDHNTVALVGVVGTTEYGMVDPISRLSEIALDRNVFLHVDAAFGGMVVPFLDRPVPFDFSLPGVSSISVDPHKMGMSTIPAGCLLTRSAEWFSCLNVDTPYLTVKRECTLAGTRPGASVAAAIAVLEYLGMDGMRAVVAGCMENCRRLIEGMETLGYPRAVTPDVNVATFSCERAPVGWRVSTTRNGHMRIVCMPHVTRDVVEQFLVDMGDTDA.

An N6-(pyridoxal phosphate)lysine modification is found at Lys224.

Belongs to the group II decarboxylase family. MfnA subfamily. Requires pyridoxal 5'-phosphate as cofactor.

The catalysed reaction is L-tyrosine + H(+) = tyramine + CO2. It carries out the reaction L-aspartate + H(+) = beta-alanine + CO2. It functions in the pathway cofactor biosynthesis; methanofuran biosynthesis. The protein operates within cofactor biosynthesis; coenzyme A biosynthesis. Functionally, catalyzes the decarboxylation of L-tyrosine to produce tyramine for methanofuran biosynthesis. Can also catalyze the decarboxylation of L-aspartate to produce beta-alanine for coenzyme A (CoA) biosynthesis. The polypeptide is Probable L-tyrosine/L-aspartate decarboxylase (Methanoculleus marisnigri (strain ATCC 35101 / DSM 1498 / JR1)).